A 443-amino-acid polypeptide reads, in one-letter code: ATP-dependent protease ATPase subunit HslU (443 aa).

ATP contacts are provided by residues isoleucine 18, glycine 60–glutamate 65, aspartate 256, glutamate 321, and arginine 393.

Belongs to the ClpX chaperone family. HslU subfamily. In terms of assembly, a double ring-shaped homohexamer of HslV is capped on each side by a ring-shaped HslU homohexamer. The assembly of the HslU/HslV complex is dependent on binding of ATP.

Its subcellular location is the cytoplasm. ATPase subunit of a proteasome-like degradation complex; this subunit has chaperone activity. The binding of ATP and its subsequent hydrolysis by HslU are essential for unfolding of protein substrates subsequently hydrolyzed by HslV. HslU recognizes the N-terminal part of its protein substrates and unfolds these before they are guided to HslV for hydrolysis. The polypeptide is ATP-dependent protease ATPase subunit HslU (Escherichia coli O157:H7 (strain EC4115 / EHEC)).